Here is a 227-residue protein sequence, read N- to C-terminus: uncharacterized protein (227 aa).

The region spanning 2-115 is the Response regulatory domain; it reads KILMIEDNVS…TLVARIKAVI (114 aa). Asp51 carries the 4-aspartylphosphate modification. A DNA-binding region (ompR/PhoB-type) is located at residues 128–226; that stretch reads EDMIETECFT…VWGVGYKFDE (99 aa).

Post-translationally, phosphorylated by YclK.

The protein resides in the cytoplasm. In terms of biological role, could be member of the two-component regulatory system YclK/YclJ. This is an uncharacterized protein from Bacillus subtilis (strain 168).